The primary structure comprises 591 residues: L-fucose isomerase (591 aa).

Residues glutamate 337 and aspartate 361 each act as proton acceptor in the active site. The Mn(2+) site is built by glutamate 337, aspartate 361, and histidine 528.

This sequence belongs to the L-fucose isomerase family. In terms of assembly, homohexamer. Mn(2+) serves as cofactor.

The protein localises to the cytoplasm. It carries out the reaction L-fucose = L-fuculose. It participates in carbohydrate degradation; L-fucose degradation; L-lactaldehyde and glycerone phosphate from L-fucose: step 1/3. Its function is as follows. Converts the aldose L-fucose into the corresponding ketose L-fuculose. This chain is L-fucose isomerase, found in Salmonella choleraesuis (strain SC-B67).